The primary structure comprises 538 residues: Small ribosomal subunit protein uS3m (538 aa).

Residues 111–134 (SSEGTEEERNEVRGRGAGKRVESI) are disordered. Over residues 120 to 134 (NEVRGRGAGKRVESI) the composition is skewed to basic and acidic residues.

It belongs to the universal ribosomal protein uS3 family.

It is found in the mitochondrion. In Oryza sativa subsp. japonica (Rice), this protein is Small ribosomal subunit protein uS3m (RPS3).